The sequence spans 189 residues: MDKTTLSVNACNLEYVREKAIVGVQAAKTSTLIFFVIILAISALLLWFQTSDNPVFNELTRYMRIKNTVNDWKSLTDSKTKLESDRGRLLAAGKDDIFEFKCVDFGAYFIAMRLDKKTYLPQAIRRGTGDAWMVKKAAKVDPSAQQFCQYLIKHKSNNVITCGNEMLNELGYSGYFMSPHWCSDFSNME.

At 1-28 (MDKTTLSVNACNLEYVREKAIVGVQAAK) the chain is on the intravirion side. Residues 29–49 (TSTLIFFVIILAISALLLWFQ) traverse the membrane as a helical; Signal-anchor for type III membrane protein segment. Residues 50–189 (TSDNPVFNEL…HWCSDFSNME (140 aa)) are Virion surface-facing.

This sequence belongs to the orthopoxvirus OPG107 family. As to quaternary structure, part of a stable entry-fusion complex (EFC) which is at least composed of proteins OPG143, OPG147, OPG155, OPG86, OPG94, OPG107, OPG104, and OPG099. Formation of the viral membrane is necessary for the assembly of the complex. Post-translationally, contains two intramolecular disulfide bonds. They are created by the viral disulfide bond formation pathway, a poxvirus-specific pathway that operates on the cytoplasmic side of the MV membranes.

It localises to the virion membrane. The protein resides in the host endoplasmic reticulum membrane. Functionally, envelope protein part of the entry-fusion complex responsible for the virus membrane fusion with host cell membrane during virus entry. Also plays a role in cell-cell fusion (syncytium formation). This chain is Protein OPG107 (OPG107), found in Bos taurus (Bovine).